A 146-amino-acid polypeptide reads, in one-letter code: Hemoglobin subunit beta (146 aa).

Residue valine 1 is modified to N-acetylvaline. The Globin domain occupies 2-146; it reads HLTADEKTAV…VANALAHKYH (145 aa). Position 12 is a phosphothreonine (threonine 12). Phosphoserine is present on serine 44. Lysine 59 carries the post-translational modification N6-acetyllysine. Histidine 63 provides a ligand contact to heme b. At lysine 82 the chain carries N6-acetyllysine. Histidine 92 provides a ligand contact to heme b. At cysteine 93 the chain carries S-nitrosocysteine. Lysine 144 is subject to N6-acetyllysine.

The protein belongs to the globin family. In terms of assembly, heterotetramer of two alpha chains and two beta chains. In terms of tissue distribution, red blood cells.

Its function is as follows. Involved in oxygen transport from the lung to the various peripheral tissues. The polypeptide is Hemoglobin subunit beta (HBB) (Procyon lotor (Raccoon)).